We begin with the raw amino-acid sequence, 655 residues long: Probable alpha-galactosidase D (655 aa).

An N-terminal signal peptide occupies residues Met-1–Gly-16. Residues Asn-47 and Asn-91 are each glycosylated (N-linked (GlcNAc...) asparagine). Cys-124 and Cys-155 are disulfide-bonded. Asp-153 (nucleophile) is an active-site residue. Residues Asn-180 and Asn-189 are each glycosylated (N-linked (GlcNAc...) asparagine). Substrate is bound at residue Glu-198 to Asp-202. The Proton donor role is filled by Asp-220. N-linked (GlcNAc...) asparagine glycans are attached at residues Asn-349, Asn-436, Asn-458, Asn-503, Asn-537, Asn-541, and Asn-580.

This sequence belongs to the glycosyl hydrolase 27 family.

The protein resides in the secreted. It carries out the reaction Hydrolysis of terminal, non-reducing alpha-D-galactose residues in alpha-D-galactosides, including galactose oligosaccharides, galactomannans and galactolipids.. In terms of biological role, hydrolyzes a variety of simple alpha-D-galactoside as well as more complex molecules such as oligosaccharides and polysaccharides. The polypeptide is Probable alpha-galactosidase D (aglD) (Aspergillus flavus (strain ATCC 200026 / FGSC A1120 / IAM 13836 / NRRL 3357 / JCM 12722 / SRRC 167)).